The primary structure comprises 133 residues: Small ribosomal subunit protein uS8 (133 aa).

It belongs to the universal ribosomal protein uS8 family. In terms of assembly, part of the 30S ribosomal subunit. Contacts proteins S5 and S12.

Functionally, one of the primary rRNA binding proteins, it binds directly to 16S rRNA central domain where it helps coordinate assembly of the platform of the 30S subunit. This is Small ribosomal subunit protein uS8 from Rippkaea orientalis (strain PCC 8801 / RF-1) (Cyanothece sp. (strain PCC 8801)).